The following is a 69-amino-acid chain: DNA gyrase inhibitor YacG (69 aa).

The Zn(2+) site is built by Cys-7, Cys-10, Cys-26, and Cys-30.

Belongs to the DNA gyrase inhibitor YacG family. In terms of assembly, interacts with GyrB. Requires Zn(2+) as cofactor.

Its function is as follows. Inhibits all the catalytic activities of DNA gyrase by preventing its interaction with DNA. Acts by binding directly to the C-terminal domain of GyrB, which probably disrupts DNA binding by the gyrase. The chain is DNA gyrase inhibitor YacG from Shewanella baltica (strain OS223).